The following is a 154-amino-acid chain: Myoglobin (154 aa).

The region spanning 2 to 148 is the Globin domain; that stretch reads GLSDGEWQLV…FRKDIAAKYK (147 aa). S4 carries the post-translational modification Phosphoserine. H65 contributes to the nitrite binding site. Residue H65 coordinates O2. Phosphothreonine is present on T68. H94 provides a ligand contact to heme b.

The protein belongs to the globin family. As to quaternary structure, monomeric.

The protein resides in the cytoplasm. Its subcellular location is the sarcoplasm. The catalysed reaction is Fe(III)-heme b-[protein] + nitric oxide + H2O = Fe(II)-heme b-[protein] + nitrite + 2 H(+). It catalyses the reaction H2O2 + AH2 = A + 2 H2O. Monomeric heme protein which primary function is to store oxygen and facilitate its diffusion within muscle tissues. Reversibly binds oxygen through a pentacoordinated heme iron and enables its timely and efficient release as needed during periods of heightened demand. Depending on the oxidative conditions of tissues and cells, and in addition to its ability to bind oxygen, it also has a nitrite reductase activity whereby it regulates the production of bioactive nitric oxide. Under stress conditions, like hypoxia and anoxia, it also protects cells against reactive oxygen species thanks to its pseudoperoxidase activity. The polypeptide is Myoglobin (MB) (Peponocephala electra (Melon-headed whale)).